Consider the following 205-residue polypeptide: CASP-like protein 2A1 (205 aa).

The Cytoplasmic portion of the chain corresponds to 1–35 (MMGDKGEKECATASSPIELGCGEGDESGNKSSMRT). Residues 36 to 56 (VETLLRLVPVALCTVSLVVML) traverse the membrane as a helical segment. Residues 57–77 (KNSQTNDFGSLSYSDLGAFRY) lie on the Extracellular side of the membrane. The helical transmembrane segment at 78–98 (LVHANGICAGYSLLSAIFTAM) threads the bilayer. The Cytoplasmic segment spans residues 99-106 (PRPPTMSR). The helical transmembrane segment at 107-127 (AWTFFLLDQVLTYLILAAGAV) threads the bilayer. Residues 128-157 (STEVVYLAYKGDEAVTWSDACSSFGGFCQK) lie on the Extracellular side of the membrane. Residues 158–178 (TTASISITFVTVLCYAVLSLI) form a helical membrane-spanning segment. The Cytoplasmic portion of the chain corresponds to 179-205 (SSYKLFSKYDAPICFNGKGIEIAAFHS).

The protein belongs to the Casparian strip membrane proteins (CASP) family. Homodimer and heterodimers.

Its subcellular location is the cell membrane. The chain is CASP-like protein 2A1 from Vitis vinifera (Grape).